A 237-amino-acid polypeptide reads, in one-letter code: Octopine transport system permease protein OccQ (237 aa).

The region spanning 22 to 222 (TGMTVAVASS…LITFISGQAF (201 aa)) is the ABC transmembrane type-1 domain. The next 4 helical transmembrane spans lie at 24 to 44 (MTVAVASSAFTIGLVFGCLGA), 72 to 92 (LVIYLFYFGSSSLISGVGSLF), 96 to 116 (GFVSAPAFLTGALAIGLVSAA), and 201 to 221 (FSFYLTAAALYLLITFISGQA).

The protein belongs to the binding-protein-dependent transport system permease family. HisMQ subfamily.

Its subcellular location is the cell inner membrane. Its function is as follows. Component of the octopine active transport system probably consisting of four subunits: Q, M, P and T. The chain is Octopine transport system permease protein OccQ (occQ) from Rhizobium meliloti (Ensifer meliloti).